Consider the following 375-residue polypeptide: Mitogen-activated protein kinase 1 (375 aa).

The region spanning 43–329 (RPPIMPIGRG…VEEALAHPYL (287 aa)) is the Protein kinase domain. ATP contacts are provided by residues 49–57 (IGRGAYGIV) and Lys-72. The Proton acceptor role is filled by Asp-169. Thr-201 bears the Phosphothreonine mark. The short motif at 201–203 (TEY) is the TXY element. Tyr-203 bears the Phosphotyrosine mark. A Phosphothreonine modification is found at Thr-206.

It belongs to the protein kinase superfamily. CMGC Ser/Thr protein kinase family. MAP kinase subfamily. Mg(2+) serves as cofactor. Post-translationally, activated by wounding and UV-C in a cultivar-dependent manner; phosphorylated in cv. Pungchon but not in cv. Subicho.

The catalysed reaction is L-seryl-[protein] + ATP = O-phospho-L-seryl-[protein] + ADP + H(+). The enzyme catalyses L-threonyl-[protein] + ATP = O-phospho-L-threonyl-[protein] + ADP + H(+). With respect to regulation, activated by threonine and tyrosine phosphorylation. Functionally, stress-inducible protein kinase involved in oxidative stress-mediated and innate immune MAP kinase signaling cascades. The protein is Mitogen-activated protein kinase 1 of Capsicum annuum (Capsicum pepper).